Here is a 301-residue protein sequence, read N- to C-terminus: Recombination-associated protein RdgC (301 aa).

The protein belongs to the RdgC family.

It localises to the cytoplasm. The protein resides in the nucleoid. Its function is as follows. May be involved in recombination. The chain is Recombination-associated protein RdgC from Xanthomonas axonopodis pv. citri (strain 306).